The following is a 261-amino-acid chain: Glutamate 5-kinase (261 aa).

ATP is bound at residue K7. S46, D131, and N147 together coordinate substrate. ATP is bound by residues 167–168 (SD) and 209–215 (TGGIVTK).

Belongs to the glutamate 5-kinase family.

The protein localises to the cytoplasm. The catalysed reaction is L-glutamate + ATP = L-glutamyl 5-phosphate + ADP. Its pathway is amino-acid biosynthesis; L-proline biosynthesis; L-glutamate 5-semialdehyde from L-glutamate: step 1/2. In terms of biological role, catalyzes the transfer of a phosphate group to glutamate to form L-glutamate 5-phosphate. The protein is Glutamate 5-kinase of Wolinella succinogenes (strain ATCC 29543 / DSM 1740 / CCUG 13145 / JCM 31913 / LMG 7466 / NCTC 11488 / FDC 602W) (Vibrio succinogenes).